The chain runs to 405 residues: NADH-quinone oxidoreductase subunit D (405 aa).

This sequence belongs to the complex I 49 kDa subunit family. In terms of assembly, NDH-1 is composed of 14 different subunits. Subunits NuoB, C, D, E, F, and G constitute the peripheral sector of the complex.

It localises to the cell inner membrane. It catalyses the reaction a quinone + NADH + 5 H(+)(in) = a quinol + NAD(+) + 4 H(+)(out). Its function is as follows. NDH-1 shuttles electrons from NADH, via FMN and iron-sulfur (Fe-S) centers, to quinones in the respiratory chain. The immediate electron acceptor for the enzyme in this species is believed to be ubiquinone. Couples the redox reaction to proton translocation (for every two electrons transferred, four hydrogen ions are translocated across the cytoplasmic membrane), and thus conserves the redox energy in a proton gradient. The sequence is that of NADH-quinone oxidoreductase subunit D from Leptospira interrogans serogroup Icterohaemorrhagiae serovar copenhageni (strain Fiocruz L1-130).